A 78-amino-acid polypeptide reads, in one-letter code: Small ribosomal subunit protein bS21A (78 aa).

Residues 30-52 (MKARSAYEKPSEKRAREKGEAVR) are compositionally biased toward basic and acidic residues. The tract at residues 30-78 (MKARSAYEKPSEKRAREKGEAVRRQRKLARKKLQREGLLPAPKKAVRAR) is disordered. Positions 53-62 (RQRKLARKKL) are enriched in basic residues.

This sequence belongs to the bacterial ribosomal protein bS21 family.

The protein is Small ribosomal subunit protein bS21A of Rhizobium etli (strain ATCC 51251 / DSM 11541 / JCM 21823 / NBRC 15573 / CFN 42).